The following is a 629-amino-acid chain: tRNA uridine 5-carboxymethylaminomethyl modification enzyme MnmG (629 aa).

FAD contacts are provided by residues 13 to 18 (GGGHAG), Val125, and Ser180. An NAD(+)-binding site is contributed by 273–287 (GPRYCPSIEDKVMRF). An FAD-binding site is contributed by Gln370.

This sequence belongs to the MnmG family. As to quaternary structure, homodimer. Heterotetramer of two MnmE and two MnmG subunits. Requires FAD as cofactor.

Its subcellular location is the cytoplasm. NAD-binding protein involved in the addition of a carboxymethylaminomethyl (cmnm) group at the wobble position (U34) of certain tRNAs, forming tRNA-cmnm(5)s(2)U34. This is tRNA uridine 5-carboxymethylaminomethyl modification enzyme MnmG from Escherichia coli (strain SMS-3-5 / SECEC).